The chain runs to 432 residues: Queuine tRNA-ribosyltransferase accessory subunit 2 (432 aa).

Residues Cys329, Cys331, Cys334, and His360 each coordinate Zn(2+). The segment at 390–432 is disordered; sequence GQKSLPPYEPPKEEKLPMPAAQKAELMEPMEDLGEKQNKKQRA. The span at 422-432 shows a compositional bias: basic and acidic residues; it reads LGEKQNKKQRA.

Belongs to the queuine tRNA-ribosyltransferase family. QTRT2 subfamily. As to quaternary structure, heterodimer of a catalytic subunit and an accessory subunit. Zn(2+) is required as a cofactor.

It is found in the cytoplasm. In terms of biological role, non-catalytic subunit of the queuine tRNA-ribosyltransferase (TGT) that catalyzes the base-exchange of a guanine (G) residue with queuine (Q) at position 34 (anticodon wobble position) in tRNAs with GU(N) anticodons (tRNA-Asp, -Asn, -His and -Tyr), resulting in the hypermodified nucleoside queuosine (7-(((4,5-cis-dihydroxy-2-cyclopenten-1-yl)amino)methyl)-7-deazaguanosine). The protein is Queuine tRNA-ribosyltransferase accessory subunit 2 of Anopheles gambiae (African malaria mosquito).